The sequence spans 162 residues: 6,7-dimethyl-8-ribityllumazine synthase (162 aa).

5-amino-6-(D-ribitylamino)uracil is bound by residues phenylalanine 22, 56–58 (TFE), and 80–82 (AVI). 85–86 (GT) is a (2S)-2-hydroxy-3-oxobutyl phosphate binding site. Histidine 88 acts as the Proton donor in catalysis. Methionine 113 contributes to the 5-amino-6-(D-ribitylamino)uracil binding site. Arginine 127 provides a ligand contact to (2S)-2-hydroxy-3-oxobutyl phosphate.

This sequence belongs to the DMRL synthase family.

It carries out the reaction (2S)-2-hydroxy-3-oxobutyl phosphate + 5-amino-6-(D-ribitylamino)uracil = 6,7-dimethyl-8-(1-D-ribityl)lumazine + phosphate + 2 H2O + H(+). It functions in the pathway cofactor biosynthesis; riboflavin biosynthesis; riboflavin from 2-hydroxy-3-oxobutyl phosphate and 5-amino-6-(D-ribitylamino)uracil: step 1/2. In terms of biological role, catalyzes the formation of 6,7-dimethyl-8-ribityllumazine by condensation of 5-amino-6-(D-ribitylamino)uracil with 3,4-dihydroxy-2-butanone 4-phosphate. This is the penultimate step in the biosynthesis of riboflavin. The polypeptide is 6,7-dimethyl-8-ribityllumazine synthase (Anaeromyxobacter dehalogenans (strain 2CP-1 / ATCC BAA-258)).